Consider the following 875-residue polypeptide: Phosphoenolpyruvate carboxylase (875 aa).

Residues H137 and K542 contribute to the active site.

It belongs to the PEPCase type 1 family. The cofactor is Mg(2+).

It carries out the reaction oxaloacetate + phosphate = phosphoenolpyruvate + hydrogencarbonate. Functionally, forms oxaloacetate, a four-carbon dicarboxylic acid source for the tricarboxylic acid cycle. The protein is Phosphoenolpyruvate carboxylase of Pseudomonas putida (strain ATCC 47054 / DSM 6125 / CFBP 8728 / NCIMB 11950 / KT2440).